The primary structure comprises 146 residues: 3-dehydroquinate dehydratase (146 aa).

Residue Tyr-23 is the Proton acceptor of the active site. The substrate site is built by Asn-74, His-80, and Asp-87. The active-site Proton donor is His-100. Residues 101–102 (IS) and Arg-111 each bind substrate.

It belongs to the type-II 3-dehydroquinase family. As to quaternary structure, homododecamer.

It carries out the reaction 3-dehydroquinate = 3-dehydroshikimate + H2O. It functions in the pathway metabolic intermediate biosynthesis; chorismate biosynthesis; chorismate from D-erythrose 4-phosphate and phosphoenolpyruvate: step 3/7. Functionally, catalyzes a trans-dehydration via an enolate intermediate. This Bacillus cereus (strain ATCC 10987 / NRS 248) protein is 3-dehydroquinate dehydratase.